We begin with the raw amino-acid sequence, 832 residues long: Vacuolar transmembrane transporter penV (832 aa).

2 helical membrane-spanning segments follow: residues 39-59 (LYTQ…AFCI) and 117-137 (FFKF…AIIL). Residues 152–171 (WDNPPGNKTTSPIDGSEKEK) form a disordered region. Asn158 carries an N-linked (GlcNAc...) asparagine glycan. A helical membrane pass occupies residues 178–198 (YLWIYVLFAYVFSGLAIYMLL). N-linked (GlcNAc...) asparagine glycosylation is present at Asn214. Residues 291–322 (NDGNALPLTEQQPRDADDERSGLLSGHDNEHV) are disordered. Residues 302 to 321 (QPRDADDERSGLLSGHDNEH) are compositionally biased toward basic and acidic residues. 9 helical membrane passes run 434-454 (FVIG…ASLL), 483-503 (GLPT…YEWL), 524-544 (FFFS…ASGF), 560-582 (TIAL…LLIL), 587-608 (LFPF…FLSA), 623-645 (FSYG…YSVF), 650-672 (LICL…QLLY), 687-707 (MICN…IGVL), and 713-733 (ITRS…SYWF). Residues 754-777 (PGGGDISPSPSSTLSPPSGLDRDS) are disordered. The span at 759-771 (ISPSPSSTLSPPS) shows a compositional bias: low complexity.

Belongs to the CSC1 (TC 1.A.17) family.

It localises to the vacuole membrane. Its function is as follows. Vacuolar transmembrane transporter that participates in the first stage of the beta-lactam biosynthesis (the formation of the ACV tripeptide), probably taking part in the supply of amino acids from the vacuolar lumen to the vacuole-anchored ACV synthetase. The sequence is that of Vacuolar transmembrane transporter penV from Penicillium rubens (strain ATCC 28089 / DSM 1075 / NRRL 1951 / Wisconsin 54-1255) (Penicillium chrysogenum).